The primary structure comprises 427 residues: Gamma-glutamyl phosphate reductase (427 aa).

It belongs to the gamma-glutamyl phosphate reductase family.

Its subcellular location is the cytoplasm. The catalysed reaction is L-glutamate 5-semialdehyde + phosphate + NADP(+) = L-glutamyl 5-phosphate + NADPH + H(+). The protein operates within amino-acid biosynthesis; L-proline biosynthesis; L-glutamate 5-semialdehyde from L-glutamate: step 2/2. Its function is as follows. Catalyzes the NADPH-dependent reduction of L-glutamate 5-phosphate into L-glutamate 5-semialdehyde and phosphate. The product spontaneously undergoes cyclization to form 1-pyrroline-5-carboxylate. The sequence is that of Gamma-glutamyl phosphate reductase from Brucella anthropi (strain ATCC 49188 / DSM 6882 / CCUG 24695 / JCM 21032 / LMG 3331 / NBRC 15819 / NCTC 12168 / Alc 37) (Ochrobactrum anthropi).